A 268-amino-acid chain; its full sequence is uncharacterized protein (268 aa).

3 helical membrane-spanning segments follow: residues 169-189 (AIIYVFMCLFFSLFWFYQGFA), 190-210 (GVKTSILTGTAEIGLAILWLL), and 225-245 (IFAGFACLGSEIFMWVLLSVF).

Its subcellular location is the cell membrane. This is an uncharacterized protein from Bacillus subtilis (strain 168).